A 152-amino-acid polypeptide reads, in one-letter code: Clitocypin-4/-3 (152 aa).

This sequence belongs to the protease inhibitor I48 family. In terms of assembly, homodimer.

Functionally, binds and inhibits cysteine proteinases. Inhibits most strongly papain and cathepsin L, more weakly bromelain and cathepsin B while it is completely ineffective against cathepsin H. The protein is Clitocypin-4/-3 (clt4) of Clitocybe nebularis (Clouded agaric).